A 374-amino-acid polypeptide reads, in one-letter code: MAKRDFYEILGVGKSASDEEIKKAYRKLAMKHHPDRNPDSKGAEDKFKEAKEAYEMLSDPQKRDAYDRYGHAGVDPNMGGGGGGGGFADAFGDIFGDIFGQAGGGRGGRGGPQVYRGADLRYNLEITLEQAAHGYDTTIRVPSWDNCETCDGSGAKPGTSPVNCTTCGGHGQVRMQQGFFSVLQTCPKCHGSGKINPSPCGTCSGAGKIKRNKTLEVKIPSGIDDGMRIRSSGNGEPGMNGGPPGDLYVEIRIKQHPMFQRDGDDLHCEIPISFAKAALGGEIEVPTLNGKASFTIPEGTQSGKTFRLRSKGIKGVRSGYAGDLFCHVIVETPVTLTERQKELMREFEQLTIEGGSKHSPQTKSWKDKVKEFFE.

Residues 5-70 (DFYEILGVGK…QKRDAYDRYG (66 aa)) form the J domain. Positions 29–50 (AMKHHPDRNPDSKGAEDKFKEA) are disordered. Basic and acidic residues predominate over residues 35–50 (DRNPDSKGAEDKFKEA). The CR-type zinc finger occupies 134–212 (GYDTTIRVPS…CSGAGKIKRN (79 aa)). Zn(2+)-binding residues include C147, C150, C164, C167, C186, C189, C200, and C203. CXXCXGXG motif repeat units follow at residues 147 to 154 (CETCDGSG), 164 to 171 (CTTCGGHG), 186 to 193 (CPKCHGSG), and 200 to 207 (CGTCSGAG).

This sequence belongs to the DnaJ family. Homodimer. Zn(2+) serves as cofactor.

Its subcellular location is the cytoplasm. In terms of biological role, participates actively in the response to hyperosmotic and heat shock by preventing the aggregation of stress-denatured proteins and by disaggregating proteins, also in an autonomous, DnaK-independent fashion. Unfolded proteins bind initially to DnaJ; upon interaction with the DnaJ-bound protein, DnaK hydrolyzes its bound ATP, resulting in the formation of a stable complex. GrpE releases ADP from DnaK; ATP binding to DnaK triggers the release of the substrate protein, thus completing the reaction cycle. Several rounds of ATP-dependent interactions between DnaJ, DnaK and GrpE are required for fully efficient folding. Also involved, together with DnaK and GrpE, in the DNA replication of plasmids through activation of initiation proteins. The protein is Chaperone protein DnaJ of Janthinobacterium sp. (strain Marseille) (Minibacterium massiliensis).